A 416-amino-acid chain; its full sequence is Serine hydroxymethyltransferase (416 aa).

Residues leucine 121 and 125 to 127 (GHL) contribute to the (6S)-5,6,7,8-tetrahydrofolate site. Lysine 229 bears the N6-(pyridoxal phosphate)lysine mark. (6S)-5,6,7,8-tetrahydrofolate-binding positions include glutamate 245 and 354 to 356 (SPF).

This sequence belongs to the SHMT family. Homodimer. Requires pyridoxal 5'-phosphate as cofactor.

It localises to the cytoplasm. It catalyses the reaction (6R)-5,10-methylene-5,6,7,8-tetrahydrofolate + glycine + H2O = (6S)-5,6,7,8-tetrahydrofolate + L-serine. Its pathway is one-carbon metabolism; tetrahydrofolate interconversion. It participates in amino-acid biosynthesis; glycine biosynthesis; glycine from L-serine: step 1/1. In terms of biological role, catalyzes the reversible interconversion of serine and glycine with tetrahydrofolate (THF) serving as the one-carbon carrier. This reaction serves as the major source of one-carbon groups required for the biosynthesis of purines, thymidylate, methionine, and other important biomolecules. Also exhibits THF-independent aldolase activity toward beta-hydroxyamino acids, producing glycine and aldehydes, via a retro-aldol mechanism. The polypeptide is Serine hydroxymethyltransferase (Aliivibrio fischeri (strain ATCC 700601 / ES114) (Vibrio fischeri)).